Here is a 224-residue protein sequence, read N- to C-terminus: Ankyrin repeat domain-containing protein 45 (224 aa).

2 ANK repeats span residues 46 to 76 (VGRN…DVNE) and 80 to 109 (RGYS…DFQA).

In terms of tissue distribution, widely expressed.

It is found in the cytoplasm. It localises to the midbody. Its subcellular location is the midbody ring. The protein localises to the cleavage furrow. Functionally, may play a role during cell division. This chain is Ankyrin repeat domain-containing protein 45, found in Danio rerio (Zebrafish).